A 138-amino-acid chain; its full sequence is Small ribosomal subunit protein uS11c (138 aa).

Residues 1–22 (MTKPIPRIGSRRNGRIGSRKNA) form a disordered region. Residues 9–22 (GSRRNGRIGSRKNA) show a composition bias toward basic residues.

The protein belongs to the universal ribosomal protein uS11 family. Part of the 30S ribosomal subunit.

Its subcellular location is the plastid. The protein localises to the chloroplast. The sequence is that of Small ribosomal subunit protein uS11c from Dioscorea elephantipes (Elephant's foot yam).